We begin with the raw amino-acid sequence, 646 residues long: Choline transporter-like protein 1 (646 aa).

The Cytoplasmic segment spans residues 1 to 27; it reads MGCCGCGSEEGSVRQWKPLEQRSCTDV. Residues 28–48 traverse the membrane as a helical segment; that stretch reads LWLLIFVLFCIGMAIICGFAI. Residues 49–207 lie on the Extracellular side of the membrane; the sequence is ASGAAQRLVF…RVITGVMTSK (159 aa). N133 carries N-linked (GlcNAc...) asparagine glycosylation. A helical transmembrane segment spans residues 208-228; sequence EIIVGLCLMSLVLSILLMVII. Residues 229-233 lie on the Cytoplasmic side of the membrane; the sequence is RYISK. The helical transmembrane segment at 234–254 threads the bilayer; the sequence is VLVWILAILTIIGSIGGTAVL. The Extracellular portion of the chain corresponds to 255–281; sequence WWLYADHKKTLKLDPSQGDVAADNVTA. N-linked (GlcNAc...) asparagine glycosylation occurs at N278. The helical transmembrane segment at 282-302 threads the bilayer; it reads LLVCAIIATVITVILLLLMLI. The Cytoplasmic segment spans residues 303 to 308; the sequence is MRKRVA. A helical transmembrane segment spans residues 309–329; it reads LTIALFHVAGKVFIHIPFLIF. Over 330 to 331 the chain is Extracellular; that stretch reads QS. A helical membrane pass occupies residues 332-352; that stretch reads LWTFLALAFFWIYWIAVLLLL. The Cytoplasmic segment spans residues 353–373; it reads ATAGYPQKKDQGYVEFKVSGP. Residues 374-394 traverse the membrane as a helical segment; that stretch reads LQYTWIYHLVGLIWISEFILA. Residues 395 to 435 lie on the Extracellular side of the membrane; sequence CQQMTIAGAVVTYYFTRDKHNLPATPILASMCRLIKYHLGT. Residues 436 to 456 form a helical membrane-spanning segment; sequence VAKGSFIITLIKIPQMILVYI. The Cytoplasmic segment spans residues 457–530; it reads HSQLKGKENA…RVAAINTVGD (74 aa). A helical membrane pass occupies residues 531 to 551; it reads FVLFLGKLLIVLVTGFVGIIL. The Extracellular segment spans residues 552–559; it reads LNYQRDYT. Residues 560–580 form a helical membrane-spanning segment; that stretch reads VWVLPLIIICLFAFFVSHCFL. The Cytoplasmic portion of the chain corresponds to 581–646; the sequence is SIYEMVVDVL…KSMASGSDNA (66 aa).

Belongs to the CTL (choline transporter-like) family. In terms of tissue distribution, present in myelinated structures from brain and spinal cord (at protein level).

Its subcellular location is the cell membrane. It is found in the mitochondrion outer membrane. The catalysed reaction is choline(out) + n H(+)(in) = choline(in) + n H(+)(out). It catalyses the reaction ethanolamine(out) + n H(+)(in) = ethanolamine(in) + n H(+)(out). Functionally, probable choline transporter. May be involved in membrane synthesis and myelin production. The chain is Choline transporter-like protein 1 (slc44a1) from Torpedo marmorata (Marbled electric ray).